Here is a 605-residue protein sequence, read N- to C-terminus: Aspartate--tRNA(Asp/Asn) ligase (605 aa).

Residue glutamate 186 participates in L-aspartate binding. Residues 210 to 213 (QQFK) form an aspartate region. Residues arginine 232 and histidine 460 each contribute to the L-aspartate site. 232 to 234 (RDE) is a binding site for ATP. Glutamate 494 lines the ATP pocket. L-aspartate is bound at residue arginine 501. 546 to 549 (GLDR) is a binding site for ATP.

The protein belongs to the class-II aminoacyl-tRNA synthetase family. Type 1 subfamily. In terms of assembly, homodimer.

It localises to the cytoplasm. The enzyme catalyses tRNA(Asx) + L-aspartate + ATP = L-aspartyl-tRNA(Asx) + AMP + diphosphate. Aspartyl-tRNA synthetase with relaxed tRNA specificity since it is able to aspartylate not only its cognate tRNA(Asp) but also tRNA(Asn). Reaction proceeds in two steps: L-aspartate is first activated by ATP to form Asp-AMP and then transferred to the acceptor end of tRNA(Asp/Asn). This Chlorobium chlorochromatii (strain CaD3) protein is Aspartate--tRNA(Asp/Asn) ligase.